Consider the following 730-residue polypeptide: Nitrogen fixation protein FixI (730 aa).

Over 1-101 (MHVTRDFSHY…AEVAEVAESR (101 aa)) the chain is Cytoplasmic. The HMA domain maps to 19-85 (KHIDLAVEGV…RLEELGYKAY (67 aa)). 2 residues coordinate a metal cation: cysteine 30 and cysteine 33. A helical membrane pass occupies residues 102 to 123 (FLLRCLGVAAFATMNVMMLSIP). Topologically, residues 124-138 (VWSGNVSDMLPEQRD) are extracellular. Residues 139–162 (FFHWLSALIALPAAAYAGQPFFRS) form a helical membrane-spanning segment. Residues 163–168 (AWRALS) are Cytoplasmic-facing. Residues 169 to 190 (AKTTNMDVPISIGVILALGMSV) traverse the membrane as a helical segment. At 191–202 (VETIHHAEHAYF) the chain is on the extracellular side. A helical transmembrane segment spans residues 203-223 (DAAIMLLTFLLVGRFLDQNMR). Residues 224-352 (RRTRAVAGNL…RSRYMRLADR (129 aa)) lie on the Cytoplasmic side of the membrane. The helical transmembrane segment at 353 to 375 (ASRLYAPVVHATALITILGWVIA) threads the bilayer. The Extracellular portion of the chain corresponds to 376-382 (GASWHDA). Residues 383–400 (IVTGVAVLIITCPCALGL) form a helical membrane-spanning segment. The Cytoplasmic segment spans residues 401-676 (AIPTVQTVAS…DSARKALHLM (276 aa)). The active-site 4-aspartylphosphate intermediate is the aspartate 438. Residues aspartate 622 and aspartate 626 each contribute to the Mg(2+) site. Residues 677–696 (RQNLWLAIGYNVLAVPVAIS) traverse the membrane as a helical segment. The Extracellular segment spans residues 697-701 (GVVTP). A helical transmembrane segment spans residues 702 to 720 (LIAAAAMSGSSILVMLNSL). Residues 721 to 730 (RARSDSREIV) lie on the Cytoplasmic side of the membrane.

This sequence belongs to the cation transport ATPase (P-type) (TC 3.A.3) family. Type IB subfamily.

Its subcellular location is the cell membrane. It catalyses the reaction ATP + H2O = ADP + phosphate + H(+). In terms of biological role, fixI is a pump of a specific cation involved in symbiotic nitrogen fixation. The four proteins FixG, FixH, FixI, and FixS may participate in a membrane-bound complex coupling the FixI cation pump with a redox process catalyzed by FixG. The protein is Nitrogen fixation protein FixI (fixI) of Bradyrhizobium diazoefficiens (strain JCM 10833 / BCRC 13528 / IAM 13628 / NBRC 14792 / USDA 110).